Here is a 134-residue protein sequence, read N- to C-terminus: MAEKFDNLEEHLEKFVENIRQLGIIVSDFQPSSQTGLNQKLNFMITGLQDIEKCRQQLHDINVPLEVFEYIDQGRNPQLYTKECLERALAKNEQVKGKIDTLTKFKSLLISELGKVFPEEMAKYKAIHGDDPPS.

This sequence belongs to the Mediator complex subunit 10 family. As to quaternary structure, component of the Mediator complex.

It is found in the nucleus. Its function is as follows. Component of the Mediator complex, a coactivator involved in the regulated transcription of nearly all RNA polymerase II-dependent genes. Mediator functions as a bridge to convey information from gene-specific regulatory proteins to the basal RNA polymerase II transcription machinery. Mediator is recruited to promoters by direct interactions with regulatory proteins and serves as a scaffold for the assembly of a functional preinitiation complex with RNA polymerase II and the general transcription factors. Negatively regulates the Wnt signaling pathway and positively regulates the Nodal signaling pathway. Required for cardiac cushion formation. This Danio rerio (Zebrafish) protein is Mediator of RNA polymerase II transcription subunit 10 (med10).